The primary structure comprises 213 residues: Nucleolar protein 12 (213 aa).

The stretch at 33 to 96 forms a coiled coil; it reads GFHKRKVERK…RLVTAKTESV (64 aa). Residues 118 to 213 form a disordered region; that stretch reads ARLLGLTPPE…LTGKARHSGE (96 aa). Basic residues-rich tracts occupy residues 170–182 and 198–213; these read AHSR…KHPR and KAQR…HSGE.

The protein belongs to the RRP17 family. As to quaternary structure, interacts with KIAA1191.

Its subcellular location is the nucleus. It is found in the nucleolus. The protein resides in the cytoplasm. In terms of biological role, multifunctional RNA binding protein that plays a role in RNA metabolism and DNA maintenance. Participates in the resolution of DNA stress and the maintenance of genome integrity by localizing to sites of DNA insults. Also plays a role in proper nucleolar organization by limiting nucleolar size and regulating nucleolar number. Mechanistically, regulates the nucleolar levels of fibrillarin and nucleolin, two key players in pre-rRNA processing and ribosome assembly. The sequence is that of Nucleolar protein 12 (NOL12) from Homo sapiens (Human).